We begin with the raw amino-acid sequence, 307 residues long: Small ribosomal subunit biogenesis GTPase RsgA (307 aa).

The 158-residue stretch at 80–237 (KVDLRQAIVS…IVDTPGIKEF (158 aa)) folds into the CP-type G domain. Residues 129 to 132 (NKID) and 180 to 188 (GQSGVGKSS) contribute to the GTP site. Zn(2+) is bound by residues cysteine 261, cysteine 266, histidine 268, and cysteine 274.

The protein belongs to the TRAFAC class YlqF/YawG GTPase family. RsgA subfamily. In terms of assembly, monomer. Associates with 30S ribosomal subunit, binds 16S rRNA. Zn(2+) is required as a cofactor.

It is found in the cytoplasm. In terms of biological role, one of several proteins that assist in the late maturation steps of the functional core of the 30S ribosomal subunit. Helps release RbfA from mature subunits. May play a role in the assembly of ribosomal proteins into the subunit. Circularly permuted GTPase that catalyzes slow GTP hydrolysis, GTPase activity is stimulated by the 30S ribosomal subunit. This is Small ribosomal subunit biogenesis GTPase RsgA from Borrelia garinii subsp. bavariensis (strain ATCC BAA-2496 / DSM 23469 / PBi) (Borreliella bavariensis).